The primary structure comprises 194 residues: CASP-like protein Ni6 (194 aa).

The Cytoplasmic segment spans residues 1-27 (MSSMETEKGAVPTPQAPPVAPTDNKYR). Residues 28 to 48 (VVDVILRVLLLAASIASVVLM) form a helical membrane-spanning segment. The Extracellular segment spans residues 49–75 (VTSKQTEIIVSPFGSRPNAAKFQNSPA). A helical transmembrane segment spans residues 76 to 96 (FIYLVAALSVAGLYSIITALV). Topologically, residues 97 to 109 (SLSYMRKPIVPPK) are cytoplasmic. The chain crosses the membrane as a helical span at residues 110–130 (LFWILLIHDVLLLGIVAAATG). Over 131 to 161 (TAGGVGYIGLKGNTHVRWGKIRNVYDKFCRH) the chain is Extracellular. A helical transmembrane segment spans residues 162–182 (VGASIIVSLFAAAVLVLLVFV). Topologically, residues 183–194 (NANSLYRRIPKY) are cytoplasmic.

This sequence belongs to the Casparian strip membrane proteins (CASP) family. In terms of assembly, homodimer and heterodimers.

Its subcellular location is the cell membrane. The chain is CASP-like protein Ni6 (Ni6) from Beta vulgaris subsp. maritima (Sea beet).